The following is a 614-amino-acid chain: uncharacterized protein (614 aa).

The next 4 helical transmembrane spans lie at 41-61 (GWIF…AVLF), 87-107 (LIGM…ASAV), 157-177 (DTVL…ITSG), and 178-198 (VVLV…IILF). One can recognise an ABC transmembrane type-1 domain in the interval 43 to 330 (IFLLAILTVG…IMWESARLFE (288 aa)). In terms of domain architecture, ABC transporter spans 364–603 (IKFNDITFAY…NGLYAKLWNH (240 aa)). 397-404 (GRSGAGKS) serves as a coordination point for ATP.

Belongs to the ABC transporter superfamily.

It localises to the cell membrane. This is an uncharacterized protein from Haemophilus influenzae (strain ATCC 51907 / DSM 11121 / KW20 / Rd).